Consider the following 314-residue polypeptide: DNA-directed RNA polymerase subunit alpha (314 aa).

Residues 1–227 form an alpha N-terminal domain (alpha-NTD) region; that stretch reads MIEFQKPTIS…EHLALFIDLS (227 aa). The segment at 241-314 is alpha C-terminal domain (alpha-CTD); it reads VETVMENKEP…GQSFKQETEN (74 aa).

It belongs to the RNA polymerase alpha chain family. As to quaternary structure, homodimer. The RNAP catalytic core consists of 2 alpha, 1 beta, 1 beta' and 1 omega subunit. When a sigma factor is associated with the core the holoenzyme is formed, which can initiate transcription.

It carries out the reaction RNA(n) + a ribonucleoside 5'-triphosphate = RNA(n+1) + diphosphate. Functionally, DNA-dependent RNA polymerase catalyzes the transcription of DNA into RNA using the four ribonucleoside triphosphates as substrates. This is DNA-directed RNA polymerase subunit alpha from Oenococcus oeni (strain ATCC BAA-331 / PSU-1).